The following is a 393-amino-acid chain: Golgi membrane protein 1 (393 aa).

M1 carries the N-acetylmethionine modification. Topologically, residues 1–12 (MMGLGNGRRSMK) are cytoplasmic. Residues 13-35 (SPPLILAALVACVIVLGFNYWIA) traverse the membrane as a helical; Signal-anchor for type II membrane protein segment. Residues 36-393 (SSRSVELQTR…QVGIHIPQQA (358 aa)) lie on the Lumenal side of the membrane. The stretch at 40 to 183 (VELQTRIVEL…IEEVIRKRNE (144 aa)) forms a coiled coil. N109 and N144 each carry an N-linked (GlcNAc...) asparagine glycan. Disordered regions lie at residues 180–247 (KRNE…QVQN) and 284–352 (HTQL…LAGN). At S187 the chain carries Phosphoserine. Polar residues-rich tracts occupy residues 192-201 (ETNNQHQQAL) and 227-247 (NKSQIPAPNSESLGLKPQVQN). N227 carries an N-linked (GlcNAc...) asparagine glycan. A compositionally biased stretch (basic and acidic residues) spans 294–320 (RPEEDSQYPEREQLVIRDRQEQQRASE). The span at 330-339 (DEYDMDENEA) shows a compositional bias: acidic residues.

The protein belongs to the GOLM family. As to quaternary structure, interacts with DYM. In terms of processing, glycosylated. Phosphorylation sites are present in the extracellular medium.

The protein localises to the golgi apparatus. It is found in the cis-Golgi network membrane. Functionally, unknown. Cellular response protein to viral infection. The protein is Golgi membrane protein 1 (Golm1) of Mus musculus (Mouse).